A 192-amino-acid polypeptide reads, in one-letter code: Xanthine phosphoribosyltransferase (192 aa).

Residues Leu20 and Asn27 each coordinate xanthine. A 5-phospho-alpha-D-ribose 1-diphosphate-binding site is contributed by 128-132; the sequence is AHGEA. Lys156 serves as a coordination point for xanthine.

The protein belongs to the purine/pyrimidine phosphoribosyltransferase family. Xpt subfamily. As to quaternary structure, homodimer.

It is found in the cytoplasm. It carries out the reaction XMP + diphosphate = xanthine + 5-phospho-alpha-D-ribose 1-diphosphate. Its pathway is purine metabolism; XMP biosynthesis via salvage pathway; XMP from xanthine: step 1/1. Functionally, converts the preformed base xanthine, a product of nucleic acid breakdown, to xanthosine 5'-monophosphate (XMP), so it can be reused for RNA or DNA synthesis. The polypeptide is Xanthine phosphoribosyltransferase (Lactobacillus johnsonii (strain CNCM I-12250 / La1 / NCC 533)).